Reading from the N-terminus, the 207-residue chain is N-(5'-phosphoribosyl)anthranilate isomerase (207 aa).

This sequence belongs to the TrpF family.

The enzyme catalyses N-(5-phospho-beta-D-ribosyl)anthranilate = 1-(2-carboxyphenylamino)-1-deoxy-D-ribulose 5-phosphate. Its pathway is amino-acid biosynthesis; L-tryptophan biosynthesis; L-tryptophan from chorismate: step 3/5. This is N-(5'-phosphoribosyl)anthranilate isomerase from Legionella pneumophila (strain Corby).